The chain runs to 258 residues: Ribonuclease HII (258 aa).

The RNase H type-2 domain occupies 71–258 (ELIAGIDEVG…PIKSMVNFKY (188 aa)). D77, E78, and D169 together coordinate a divalent metal cation.

The protein belongs to the RNase HII family. It depends on Mn(2+) as a cofactor. Requires Mg(2+) as cofactor.

It is found in the cytoplasm. It carries out the reaction Endonucleolytic cleavage to 5'-phosphomonoester.. Its function is as follows. Endonuclease that specifically degrades the RNA of RNA-DNA hybrids. The sequence is that of Ribonuclease HII from Lactococcus lactis subsp. cremoris (strain SK11).